A 143-amino-acid chain; its full sequence is Large ribosomal subunit protein uL11 (143 aa).

This sequence belongs to the universal ribosomal protein uL11 family. As to quaternary structure, part of the ribosomal stalk of the 50S ribosomal subunit. Interacts with L10 and the large rRNA to form the base of the stalk. L10 forms an elongated spine to which L12 dimers bind in a sequential fashion forming a multimeric L10(L12)X complex. In terms of processing, one or more lysine residues are methylated.

Its function is as follows. Forms part of the ribosomal stalk which helps the ribosome interact with GTP-bound translation factors. The chain is Large ribosomal subunit protein uL11 from Saccharophagus degradans (strain 2-40 / ATCC 43961 / DSM 17024).